The chain runs to 44 residues: Photosystem I reaction center subunit IX (44 aa).

Residues 7–27 traverse the membrane as a helical segment; that stretch reads YLSVAPVLSTLWFGSLAGLLI.

It belongs to the PsaJ family.

The protein localises to the plastid. Its subcellular location is the chloroplast thylakoid membrane. In terms of biological role, may help in the organization of the PsaE and PsaF subunits. This Arabis hirsuta (Hairy rock-cress) protein is Photosystem I reaction center subunit IX.